The sequence spans 252 residues: F-box protein At5g39250 (252 aa).

An F-box domain is found at 1 to 42; that stretch reads MFSEEVLKNVFPLLEGEDLASCMGVCKQWRDIARDDFYWKCQ.

The sequence is that of F-box protein At5g39250 from Arabidopsis thaliana (Mouse-ear cress).